The following is a 453-amino-acid chain: UDP-glucose 6-dehydrogenase (453 aa).

Residues 2–19, Val11, Thr121, and Glu158 each bind NAD(+); that span reads RLCVIGAGYVGLVTAACF. Substrate contacts are provided by residues 154-158, Lys210, Asn214, 255-259, and Gly263; these read EFLKE and FIYAG. Residue Cys266 is the Nucleophile of the active site. Lys269 lines the NAD(+) pocket. Lys327 contributes to the substrate binding site. NAD(+) is bound at residue Arg334.

Belongs to the UDP-glucose/GDP-mannose dehydrogenase family.

The enzyme catalyses UDP-alpha-D-glucose + 2 NAD(+) + H2O = UDP-alpha-D-glucuronate + 2 NADH + 3 H(+). The protein operates within nucleotide-sugar biosynthesis; UDP-alpha-D-glucuronate biosynthesis; UDP-alpha-D-glucuronate from UDP-alpha-D-glucose: step 1/1. It participates in bacterial outer membrane biogenesis; lipopolysaccharide biosynthesis. The protein is UDP-glucose 6-dehydrogenase (udg) of Pseudomonas aeruginosa (strain ATCC 15692 / DSM 22644 / CIP 104116 / JCM 14847 / LMG 12228 / 1C / PRS 101 / PAO1).